Consider the following 203-residue polypeptide: CASP-like protein 2U6 (203 aa).

At 1-31 (MSEHRIPVAADKKISPPISAGEQKGCKGLKR) the chain is on the cytoplasmic side. Residues 32-52 (TDLMLRFAAFVCCTVTMVVLI) traverse the membrane as a helical segment. The Extracellular segment spans residues 53–84 (TDKQTSAIQVPGFNNLTITKTVSFDLAKAFVY). N-linked (GlcNAc...) asparagine glycosylation occurs at asparagine 67. A helical membrane pass occupies residues 85-105 (LVSAAGIGAGYTLLVLVLSII). Topologically, residues 106–111 (SAERSK) are cytoplasmic. Residues 112-132 (AIAWFIFVFDQLITYVLLAAA) form a helical membrane-spanning segment. Over 133–164 (AASTEVAYMGAHAPPEASWLKVCSLFGRFCHQ) the chain is Extracellular. A helical transmembrane segment spans residues 165-185 (LGASLVTSLISTVLFAFSAAI). The Cytoplasmic segment spans residues 186 to 203 (SAYYLFSNTNVRPAYSKG).

The protein belongs to the Casparian strip membrane proteins (CASP) family. In terms of assembly, homodimer and heterodimers.

It localises to the cell membrane. The sequence is that of CASP-like protein 2U6 from Selaginella moellendorffii (Spikemoss).